The chain runs to 2157 residues: Unconventional myosin-IXb (2157 aa).

Residue Ser-2 is modified to N-acetylserine. Positions 15–114 constitute a Ras-associating domain; it reads AAYHLHIYPQ…YYFLLQERNA (100 aa). The region spanning 146-953 is the Myosin motor domain; sequence ADFDDLCNLP…ERQALQETLH (808 aa). Residue 239-246 coordinates ATP; it reads GESGSGKT. Residues 709–734 form a disordered region; sequence AEKAAGMSSPGAQSHPEELPRGASTP. A phosphoserine mark is found at Ser-716 and Ser-717. The interval 844–855 is actin-binding; sequence KAEPFFIRCIRS. The neck or regulatory domain stretch occupies residues 940–1044; it reads LKETERQALQ…CRGHLQRKSF (105 aa). IQ domains lie at 957–977, 979–1000, 1001–1023, and 1024–1053; these read VRKI…RHFL, MKRA…RALE, RTQA…LYRH, and QKQS…EKQK. Ser-1045 is subject to Phosphoserine. The tail stretch occupies residues 1045-2157; the sequence is SQMISEKQKA…LPPASGQTNG (1113 aa). A coiled-coil region spans residues 1046–1071; sequence QMISEKQKAEEKEREALEAARAGAEE. 3 disordered regions span residues 1046 to 1298, 1320 to 1410, and 1455 to 1484; these read QMIS…TQIQ, AAAS…GSQV, and GLEA…KKNR. 5 stretches are compositionally biased toward basic and acidic residues: residues 1050–1063, 1109–1122, 1136–1160, 1168–1183, and 1191–1201; these read EKQK…EALE, SPLE…EAPS, ESHE…EHVK, SCKE…RRVT, and LEDKKESREDE. Ser-1114, Ser-1115, and Ser-1122 each carry phosphoserine. A compositionally biased stretch (polar residues) spans 1211–1222; that stretch reads ENTSQKQPTEQP. 4 positions are modified to phosphoserine: Ser-1242, Ser-1253, Ser-1261, and Ser-1267. Residue Thr-1271 is modified to Phosphothreonine. Phosphoserine is present on residues Ser-1290, Ser-1323, and Ser-1331. At Thr-1346 the chain carries Phosphothreonine. Phosphoserine occurs at positions 1354, 1356, and 1405. The span at 1467-1478 shows a compositional bias: basic and acidic residues; that stretch reads AAGEKRTKEPGG. Residues 1632 to 1681 form a Phorbol-ester/DAG-type zinc finger; that stretch reads GHVFASYQVSIPQSCEQCLSYIWLMDKALLCSVCKMTCHKKCVHKIQSHC. Positions 1703–1888 constitute a Rho-GAP domain; sequence DSLTSDKASV…MLIKEQMRKY (186 aa). The interval 1739-1744 is interaction with RHOA; that stretch reads AANRTR. Residues 1880 to 1901 adopt a coiled-coil conformation; it reads LIKEQMRKYKVKMEEISQLEAA. 4 positions are modified to phosphoserine: Ser-1926, Ser-1972, Ser-1992, and Ser-1999. Residues 1959-1989 adopt a coiled-coil conformation; the sequence is EDREKEILIERIQSIKEEKEDITYRLPELDP. Over residues 1980-1993 the composition is skewed to basic and acidic residues; sequence ITYRLPELDPRGSD. A disordered region spans residues 1980–2157; it reads ITYRLPELDP…LPPASGQTNG (178 aa). Phosphothreonine is present on Thr-2005. The segment covering 2021–2037 has biased composition (pro residues); sequence PPAPALPCPGAPTPSPL. Ser-2050 carries the post-translational modification Phosphoserine. Over residues 2081-2093 the composition is skewed to low complexity; sequence PRWAPGAREAAAP. The span at 2095 to 2106 shows a compositional bias: basic and acidic residues; it reads RRREPPARRPDQ. At Ser-2141 the chain carries Phosphoserine.

Belongs to the TRAFAC class myosin-kinesin ATPase superfamily. Myosin family. As to quaternary structure, interacts (via IQ domains) with CALM. Interacts with RHOA. Interacts (via Rho-GAP domain) with ROBO1; this inhibits the interaction with RHOA and the stimulation of RHOA GTPase activity, and thereby increases the levels of active RHOA. As to expression, detected in peripheral blood leukocytes (at protein level). Expressed predominantly in peripheral blood leukocytes and at lower levels, in thymus, spleen, testis, prostate, ovary, brain, small intestine and lung.

The protein resides in the cytoplasm. The protein localises to the cell cortex. Its subcellular location is the perinuclear region. It is found in the cytoskeleton. Functionally, myosins are actin-based motor molecules with ATPase activity. Unconventional myosins serve in intracellular movements. Binds actin with high affinity both in the absence and presence of ATP and its mechanochemical activity is inhibited by calcium ions. Also acts as a GTPase activator for RHOA. Plays a role in the regulation of cell migration via its role as RHOA GTPase activator. This is regulated by its interaction with the SLIT2 receptor ROBO1; interaction with ROBO1 impairs interaction with RHOA and subsequent activation of RHOA GTPase activity, and thereby leads to increased levels of active, GTP-bound RHOA. This chain is Unconventional myosin-IXb (MYO9B), found in Homo sapiens (Human).